Consider the following 116-residue polypeptide: Ribosome-binding factor A (116 aa).

The protein belongs to the RbfA family. As to quaternary structure, monomer. Binds 30S ribosomal subunits, but not 50S ribosomal subunits or 70S ribosomes.

The protein resides in the cytoplasm. Its function is as follows. One of several proteins that assist in the late maturation steps of the functional core of the 30S ribosomal subunit. Associates with free 30S ribosomal subunits (but not with 30S subunits that are part of 70S ribosomes or polysomes). Required for efficient processing of 16S rRNA. May interact with the 5'-terminal helix region of 16S rRNA. This chain is Ribosome-binding factor A, found in Pediococcus pentosaceus (strain ATCC 25745 / CCUG 21536 / LMG 10740 / 183-1w).